We begin with the raw amino-acid sequence, 63 residues long: Large ribosomal subunit protein uL29 (63 aa).

The protein belongs to the universal ribosomal protein uL29 family.

In Hahella chejuensis (strain KCTC 2396), this protein is Large ribosomal subunit protein uL29.